We begin with the raw amino-acid sequence, 518 residues long: Arrestin-related trafficking adapter 10 (518 aa).

Lys-118 is covalently cross-linked (Glycyl lysine isopeptide (Lys-Gly) (interchain with G-Cter in ubiquitin)).

It belongs to the ART10 family. As to quaternary structure, interacts with RSP5. Post-translationally, ubiquitinated by RSP5.

The protein localises to the cytoplasm. In terms of biological role, may regulate endocytosis by recruiting RSP5 ubiquitin ligase activity to specific plasma membrane proteins in response to extracellular stimuli. In Saccharomyces cerevisiae (strain YJM789) (Baker's yeast), this protein is Arrestin-related trafficking adapter 10 (ART10).